The following is a 184-amino-acid chain: Ribosome maturation factor RimM (184 aa).

The region spanning threonine 112–glutamine 184 is the PRC barrel domain.

It belongs to the RimM family. Binds ribosomal protein uS19.

It localises to the cytoplasm. An accessory protein needed during the final step in the assembly of 30S ribosomal subunit, possibly for assembly of the head region. Essential for efficient processing of 16S rRNA. May be needed both before and after RbfA during the maturation of 16S rRNA. It has affinity for free ribosomal 30S subunits but not for 70S ribosomes. The polypeptide is Ribosome maturation factor RimM (Polynucleobacter necessarius subsp. necessarius (strain STIR1)).